A 76-amino-acid polypeptide reads, in one-letter code: Sec-independent protein translocase protein TatA (76 aa).

Residues 1 to 21 (MGGISITQLLIIVAIVVLLFG) form a helical membrane-spanning segment. Residues 45-76 (DDNKEKDAEFKSLSDDSETTAKTEKAKDKEQA) are disordered.

This sequence belongs to the TatA/E family. The Tat system comprises two distinct complexes: a TatABC complex, containing multiple copies of TatA, TatB and TatC subunits, and a separate TatA complex, containing only TatA subunits. Substrates initially bind to the TatABC complex, which probably triggers association of the separate TatA complex to form the active translocon.

Its subcellular location is the cell inner membrane. In terms of biological role, part of the twin-arginine translocation (Tat) system that transports large folded proteins containing a characteristic twin-arginine motif in their signal peptide across membranes. TatA could form the protein-conducting channel of the Tat system. This is Sec-independent protein translocase protein TatA from Pasteurella multocida (strain Pm70).